The chain runs to 260 residues: CD40 ligand (260 aa).

Over 1–22 (MIETYSQTAPRSVATGPPVSMK) the chain is Cytoplasmic. A helical; Signal-anchor for type II membrane protein transmembrane segment spans residues 23 to 46 (IFMYLLTVFLITQMIGSALFAVYL). At 47-260 (HRRLDKIEDE…GFTSFGLLKL (214 aa)) the chain is on the extracellular side. Residues 121 to 260 (IAAHVISEAS…GFTSFGLLKL (140 aa)) enclose the THD domain. A disulfide bond links Cys177 and Cys217. Residue Asn239 is glycosylated (N-linked (GlcNAc...) asparagine).

It belongs to the tumor necrosis factor family. As to quaternary structure, homotrimer. Interacts with CD28. CD40 ligand, soluble form: Exists as either a monomer or a homotrimer. Forms a ternary complex between CD40 and integrins for CD40-CD40LG signaling. In terms of processing, the soluble form derives from the membrane form by proteolytic processing.

The protein resides in the cell membrane. It is found in the cell surface. Its subcellular location is the secreted. Cytokine that acts as a ligand to CD40/TNFRSF5. Costimulates T-cell proliferation and cytokine production. Its cross-linking on T-cells generates a costimulatory signal which enhances the production of IL4 and IL10 in conjunction with the TCR/CD3 ligation and CD28 costimulation. Induces the activation of NF-kappa-B. Induces the activation of kinases MAPK8 and PAK2 in T-cells. Mediates B-cell proliferation in the absence of co-stimulus as well as IgE production in the presence of IL4. Involved in immunoglobulin class switching. Its function is as follows. Acts as a ligand for integrins, specifically ITGA5:ITGB1 and ITGAV:ITGB3; both integrins and the CD40 receptor are required for activation of CD40-CD40LG signaling, which have cell-type dependent effects, such as B-cell activation, NF-kappa-B signaling and anti-apoptotic signaling. The polypeptide is CD40 ligand (CD40LG) (Canis lupus familiaris (Dog)).